A 567-amino-acid chain; its full sequence is Wee1-like protein kinase 2 (567 aa).

Composition is skewed to basic and acidic residues over residues 1–12 and 26–36; these read MDDSSINKELKQ and EGQKEAPESRE. Disordered regions lie at residues 1 to 103 and 170 to 191; these read MDDS…DSRS and RSNG…EGKV. Position 77 is a phosphoserine (Ser-77). Positions 174 to 176 match the Nuclear localization signal motif; the sequence is KRK. In terms of domain architecture, Protein kinase spans 215 to 494; it reads FLEVEKIGVG…ARSRVLRPSL (280 aa). Residues 221-229 and Lys-244 contribute to the ATP site; that span reads IGVGEFGTV. Positions 318-332 match the Nuclear export signal motif; that stretch reads KLKDILLQISLGLKY. The Proton acceptor role is filled by Asp-342. The Mg(2+) site is built by Asn-347 and Asp-384. The stretch at 497–523 forms a coiled coil; it reads AEELQQQLNLEKSKTATLERELREAQQ. Positions 502-567 are disordered; it reads QQLNLEKSKT…SSFTCGKSSP (66 aa). Basic and acidic residues predominate over residues 507-520; sequence EKSKTATLERELRE. Over residues 555-567 the composition is skewed to polar residues; that stretch reads AKSSSFTCGKSSP.

The protein belongs to the protein kinase superfamily. Ser/Thr protein kinase family. WEE1 subfamily. Post-translationally, phosphorylation leads to increase its activity.

The protein localises to the nucleus. It catalyses the reaction L-tyrosyl-[protein] + ATP = O-phospho-L-tyrosyl-[protein] + ADP + H(+). Functionally, oocyte-specific protein tyrosine kinase that phosphorylates and inhibits CDK1 and acts as a key regulator of meiosis during both prophase I and metaphase II. Required to maintain meiotic arrest in oocytes during the germinal vesicle (GV) stage, a long period of quiescence at dictyate prophase I, by phosphorylating CDK1 at 'Tyr-15', leading to inhibit CDK1 activity and prevent meiotic reentry. Also required for metaphase II exit during egg activation by phosphorylating CDK1 at 'Tyr-15', to ensure exit from meiosis in oocytes and promote pronuclear formation. The chain is Wee1-like protein kinase 2 (WEE2) from Canis lupus familiaris (Dog).